The chain runs to 44 residues: Photosystem I reaction center subunit IX (44 aa).

A helical membrane pass occupies residues 7–27 (YLSVAPVLSTLWFGALAGLLI).

It belongs to the PsaJ family.

The protein localises to the plastid. Its subcellular location is the chloroplast thylakoid membrane. In terms of biological role, may help in the organization of the PsaE and PsaF subunits. In Oryza nivara (Indian wild rice), this protein is Photosystem I reaction center subunit IX.